Reading from the N-terminus, the 375-residue chain is Alpha-1,2-galactosyltransferase (375 aa).

The Cytoplasmic segment spans residues 1-2 (MR). Residues 3–23 (FAPYLISAVVITTIILGGAWW) form a helical; Signal-anchor for type II membrane protein membrane-spanning segment. The Lumenal segment spans residues 24–375 (TSAMDTKLQT…HIQNLLKPSS (352 aa)).

It belongs to the glycosyltransferase 34 family. O-glycosylated.

It is found in the golgi apparatus membrane. Functionally, involved in the O- and N-linked oligosaccharide modification of proteins transported through the Golgi stack. This occurs in cis Golgi where the enzyme transfers galactose from UDP-galactose to a variety of mannose based acceptors. The chain is Alpha-1,2-galactosyltransferase (gma12) from Schizosaccharomyces pombe (strain 972 / ATCC 24843) (Fission yeast).